We begin with the raw amino-acid sequence, 487 residues long: E3 ubiquitin-protein ligase TRIM50 (487 aa).

The segment at 16-57 adopts an RING-type zinc-finger fold; sequence CPICLEVFKEPLMLQCGHSYCKGCLVSLSCHLDAELRCPVCR. Residues 84-125 form a B box-type zinc finger; sequence PEPKVCVHHRNPLSLFCEKDQELICGLCGLLGSHQHHPVTPV. Residues C89, H92, C111, and H117 each coordinate Zn(2+). Coiled coils occupy residues 125–169 and 204–235; these read VSTV…NESD and LVAS…FGNE. The B30.2/SPRY domain occupies 276 to 475; sequence DIKLTVWKRL…LPMVLPPPSG (200 aa). An N6-acetyllysine modification is found at K373. The disordered stretch occupies residues 468-487; it reads MVLPPPSGPGPLSPEQPTKL. Pro residues predominate over residues 469-481; that stretch reads VLPPPSGPGPLSP.

This sequence belongs to the TRIM/RBCC family. In terms of assembly, can form dimers and trimers. Interacts with several E2 ubiquitin-conjugating enzymes, including UBE2L6, UBE2E1, UBE2E3. No interaction with UBE2H. Interacts with BECN1. Interacts with SQSTM1. Interacts with NLRP3. Auto-ubiquitinated. In terms of processing, acetylated by EP300 and KAT2B. HDAC6 drives TRIM50 deacetylation. Acetylation antagonizes with TRIM50 ubiquitination.

Its subcellular location is the cytoplasm. It carries out the reaction S-ubiquitinyl-[E2 ubiquitin-conjugating enzyme]-L-cysteine + [acceptor protein]-L-lysine = [E2 ubiquitin-conjugating enzyme]-L-cysteine + N(6)-ubiquitinyl-[acceptor protein]-L-lysine.. Its function is as follows. E3 ubiquitin-protein ligase that ubiquitinates Beclin-1/BECN1 in a 'Lys-63'-dependent manner enhancing its binding to ULK1. In turn, promotes starvation-induced autophagy activation. Also interacts with p62/SQSTM1 protein and thereby induces the formation and the autophagy clearance of aggresome-associated polyubiquitinated proteins through HDAC6 interaction. Also promotes NLRP3 inflammasome activation by directly inducing NLRP3 oligomerization independent of its E3 ligase function. In Homo sapiens (Human), this protein is E3 ubiquitin-protein ligase TRIM50.